The following is a 206-amino-acid chain: Large ribosomal subunit protein mL62 (206 aa).

Residues 1-29 (MATAWGLRWGLSRTGTLLLAPPARCARRA) constitute a mitochondrion transit peptide. The residue at position 90 (Gln-90) is an N5-methylglutamine.

This sequence belongs to the prokaryotic/mitochondrial release factor family. Mitochondrion-specific ribosomal protein mL62 subfamily. In terms of assembly, component of the mitochondrial ribosome large subunit (39S) which comprises a 16S rRNA and about 50 distinct proteins. Post-translationally, methylation of glutamine in the GGQ triplet by HEMK1.

It localises to the mitochondrion. The enzyme catalyses an N-acyl-L-alpha-aminoacyl-tRNA + H2O = an N-acyl-L-amino acid + a tRNA + H(+). Functionally, essential peptidyl-tRNA hydrolase component of the mitochondrial large ribosomal subunit. Acts as a codon-independent translation release factor that has lost all stop codon specificity and directs the termination of translation in mitochondrion, possibly in case of abortive elongation. May be involved in the hydrolysis of peptidyl-tRNAs that have been prematurely terminated and thus in the recycling of stalled mitochondrial ribosomes. This Mus musculus (Mouse) protein is Large ribosomal subunit protein mL62.